A 112-amino-acid polypeptide reads, in one-letter code: UPF0102 protein Cla_1413 (112 aa).

The protein belongs to the UPF0102 family.

The chain is UPF0102 protein Cla_1413 from Campylobacter lari (strain RM2100 / D67 / ATCC BAA-1060).